Consider the following 754-residue polypeptide: Relaxin receptor 2 (754 aa).

At Met-1–Asn-416 the chain is on the extracellular side. The LDL-receptor class A domain occupies Ser-44–Gly-81. 3 cysteine pairs are disulfide-bonded: Cys-45–Cys-58, Cys-52–Cys-71, and Cys-65–Cys-80. Asn-54 carries an N-linked (GlcNAc...) asparagine glycan. A glycan (N-linked (GlcNAc...) asparagine) is linked at Asn-138. LRR repeat units follow at residues Asn-138–Lys-159, Lys-162–Gly-183, Asn-186–Asp-207, Gln-210–Gly-231, Ser-234–Gln-255, Gln-258–Ser-279, Ser-282–Ser-303, Asn-306–Asp-327, Leu-330–Ser-351, and Gln-354–Pro-375. Asn-274 carries an N-linked (GlcNAc...) asparagine glycan. Asn-335 is a glycosylation site (N-linked (GlcNAc...) asparagine). An N-linked (GlcNAc...) asparagine glycan is attached at Asn-378. A helical membrane pass occupies residues Ile-417–Ile-437. Topologically, residues Gly-438 to Lys-455 are cytoplasmic. Residues Ile-456 to Ile-476 traverse the membrane as a helical segment. At Lys-477–Cys-495 the chain is on the extracellular side. Cys-495 and Cys-573 are joined by a disulfide. The chain crosses the membrane as a helical span at residues Arg-496 to Leu-518. At Glu-519 to Gln-537 the chain is on the cytoplasmic side. A helical transmembrane segment spans residues Thr-538–Trp-558. At Asn-559–Gly-592 the chain is on the extracellular side. Residues Ile-593–Phe-613 form a helical membrane-spanning segment. Topologically, residues Cys-614–Arg-639 are cytoplasmic. A helical transmembrane segment spans residues Phe-640–Leu-660. Residues Ser-661–Thr-670 are Extracellular-facing. The chain crosses the membrane as a helical span at residues Met-671 to Tyr-691. Residues Thr-692–Ser-754 lie on the Cytoplasmic side of the membrane.

Belongs to the G-protein coupled receptor 1 family. As to expression, expressed mainly in the brain, kidney, muscle, testis, thyroid, uterus, peripheral blood cells and bone marrow.

It localises to the cell membrane. Functionally, receptor for relaxin. The activity of this receptor is mediated by G proteins leading to stimulation of adenylate cyclase and an increase of cAMP. May also be a receptor for Leydig insulin-like peptide (INSL3). This Homo sapiens (Human) protein is Relaxin receptor 2 (RXFP2).